A 159-amino-acid polypeptide reads, in one-letter code: 2-C-methyl-D-erythritol 2,4-cyclodiphosphate synthase (159 aa).

A divalent metal cation-binding residues include Asp-8 and His-10. 4-CDP-2-C-methyl-D-erythritol 2-phosphate-binding positions include 8 to 10 (DVH) and 34 to 35 (HS). A divalent metal cation is bound at residue His-42. 4-CDP-2-C-methyl-D-erythritol 2-phosphate-binding positions include 56–58 (DIG), 61–65 (FPDTD), 132–135 (TTTE), Phe-139, and Arg-142.

Belongs to the IspF family. Homotrimer. The cofactor is a divalent metal cation.

It carries out the reaction 4-CDP-2-C-methyl-D-erythritol 2-phosphate = 2-C-methyl-D-erythritol 2,4-cyclic diphosphate + CMP. It functions in the pathway isoprenoid biosynthesis; isopentenyl diphosphate biosynthesis via DXP pathway; isopentenyl diphosphate from 1-deoxy-D-xylulose 5-phosphate: step 4/6. Involved in the biosynthesis of isopentenyl diphosphate (IPP) and dimethylallyl diphosphate (DMAPP), two major building blocks of isoprenoid compounds. Catalyzes the conversion of 4-diphosphocytidyl-2-C-methyl-D-erythritol 2-phosphate (CDP-ME2P) to 2-C-methyl-D-erythritol 2,4-cyclodiphosphate (ME-CPP) with a corresponding release of cytidine 5-monophosphate (CMP). This chain is 2-C-methyl-D-erythritol 2,4-cyclodiphosphate synthase, found in Syntrophobacter fumaroxidans (strain DSM 10017 / MPOB).